The chain runs to 345 residues: Phenylalanine--tRNA ligase alpha subunit (345 aa).

E272 provides a ligand contact to Mg(2+).

This sequence belongs to the class-II aminoacyl-tRNA synthetase family. Phe-tRNA synthetase alpha subunit type 1 subfamily. In terms of assembly, tetramer of two alpha and two beta subunits. It depends on Mg(2+) as a cofactor.

It localises to the cytoplasm. The enzyme catalyses tRNA(Phe) + L-phenylalanine + ATP = L-phenylalanyl-tRNA(Phe) + AMP + diphosphate + H(+). The sequence is that of Phenylalanine--tRNA ligase alpha subunit from Prochlorococcus marinus (strain MIT 9312).